The primary structure comprises 318 residues: Extracellular metalloprotease AO090012001025 (318 aa).

The first 23 residues, 1–23 (MSHFPTLHILILVIANLQIQCFA), serve as a signal peptide directing secretion. N-linked (GlcNAc...) asparagine glycans are attached at residues Asn106, Asn121, and Asn193. Zn(2+) is bound at residue His229. Glu230 is a catalytic residue. Position 233 (His233) interacts with Zn(2+). Cys268 and Cys295 are oxidised to a cystine.

The protein belongs to the peptidase M43B family.

It is found in the secreted. Functionally, secreted metalloproteinase that allows assimilation of proteinaceous substrates. The protein is Extracellular metalloprotease AO090012001025 of Aspergillus oryzae (strain ATCC 42149 / RIB 40) (Yellow koji mold).